Reading from the N-terminus, the 201-residue chain is Extracellular superoxide dismutase [Cu-Zn] (201 aa).

The first 42 residues, 1-42, serve as a signal peptide directing secretion; sequence MINSFIVIFLSFLIFINYANLVCVEATHVYGRRSHSNGMHGN. Cu cation contacts are provided by H89, H91, and H106. Residues C100 and C192 are joined by a disulfide bond. The Zn(2+) site is built by H106, H114, H123, and D126. A Cu cation-binding site is contributed by H163.

The protein belongs to the Cu-Zn superoxide dismutase family. Homodimer. The cofactor is Cu cation. It depends on Zn(2+) as a cofactor.

The protein resides in the secreted. Its subcellular location is the extracellular space. It carries out the reaction 2 superoxide + 2 H(+) = H2O2 + O2. In terms of biological role, destroys radicals which are normally produced within the cells and which are toxic to biological systems. May act in the parasite defense against phagocyte-generated reactive oxygen species. This is Extracellular superoxide dismutase [Cu-Zn] (sod-4) from Onchocerca volvulus.